Consider the following 346-residue polypeptide: Phosphoribosylformylglycinamidine cyclo-ligase (346 aa).

Belongs to the AIR synthase family.

The protein localises to the cytoplasm. The catalysed reaction is 2-formamido-N(1)-(5-O-phospho-beta-D-ribosyl)acetamidine + ATP = 5-amino-1-(5-phospho-beta-D-ribosyl)imidazole + ADP + phosphate + H(+). It functions in the pathway purine metabolism; IMP biosynthesis via de novo pathway; 5-amino-1-(5-phospho-D-ribosyl)imidazole from N(2)-formyl-N(1)-(5-phospho-D-ribosyl)glycinamide: step 2/2. The sequence is that of Phosphoribosylformylglycinamidine cyclo-ligase from Proteus mirabilis (strain HI4320).